The primary structure comprises 171 residues: Translationally-controlled tumor protein homolog (171 aa).

One can recognise a TCTP domain in the interval 1–171; the sequence is MIIYRDCISQ…FKDGLEMEKC (171 aa).

Belongs to the TCTP family. Expressed by the venom gland.

It localises to the secreted. In terms of biological role, venom protein that causes edema, enhances vascular permeability and is likely related to the inflammatory activity of the venom. This Micrurus fulvius (Eastern coral snake) protein is Translationally-controlled tumor protein homolog.